Here is an 883-residue protein sequence, read N- to C-terminus: Valine--tRNA ligase (883 aa).

Positions 46–56 (PNVTGKLHLGH) match the 'HIGH' region motif. The 'KMSKS' region motif lies at 520-524 (KMSKS). Lys-523 is a binding site for ATP. A coiled-coil region spans residues 809–844 (LVDLLNVEEELARLEKELAKWQKELDMVGKKLSNER).

The protein belongs to the class-I aminoacyl-tRNA synthetase family. ValS type 1 subfamily. Monomer.

The protein resides in the cytoplasm. The enzyme catalyses tRNA(Val) + L-valine + ATP = L-valyl-tRNA(Val) + AMP + diphosphate. Functionally, catalyzes the attachment of valine to tRNA(Val). As ValRS can inadvertently accommodate and process structurally similar amino acids such as threonine, to avoid such errors, it has a 'posttransfer' editing activity that hydrolyzes mischarged Thr-tRNA(Val) in a tRNA-dependent manner. The sequence is that of Valine--tRNA ligase from Streptococcus pneumoniae (strain ATCC BAA-255 / R6).